The primary structure comprises 488 residues: Ribulose bisphosphate carboxylase large chain (488 aa).

Positions 127 and 177 each coordinate substrate. The Proton acceptor role is filled by Lys179. Residue Lys181 participates in substrate binding. Residues Lys205, Asp207, and Glu208 each contribute to the Mg(2+) site. Lys205 bears the N6-carboxylysine mark. His297 (proton acceptor) is an active-site residue. Arg298, His330, and Ser382 together coordinate substrate.

This sequence belongs to the RuBisCO large chain family. Type I subfamily. In terms of assembly, heterohexadecamer of 8 large chains and 8 small chains. Requires Mg(2+) as cofactor.

The protein localises to the plastid. The protein resides in the chloroplast. The catalysed reaction is 2 (2R)-3-phosphoglycerate + 2 H(+) = D-ribulose 1,5-bisphosphate + CO2 + H2O. It catalyses the reaction D-ribulose 1,5-bisphosphate + O2 = 2-phosphoglycolate + (2R)-3-phosphoglycerate + 2 H(+). RuBisCO catalyzes two reactions: the carboxylation of D-ribulose 1,5-bisphosphate, the primary event in carbon dioxide fixation, as well as the oxidative fragmentation of the pentose substrate in the photorespiration process. Both reactions occur simultaneously and in competition at the same active site. This chain is Ribulose bisphosphate carboxylase large chain, found in Emiliania huxleyi (Coccolithophore).